The sequence spans 413 residues: Interferon-inducible GTPase 1 (413 aa).

Glycine 2 carries N-myristoyl glycine lipidation. The IRG-type G domain maps to 68-250 (SVLNVAVTGE…PVLMDKLISD (183 aa)). GDP contacts are provided by glycine 79, glycine 81, lysine 82, serine 83, serine 84, threonine 102, and glycine 103. A (Microbial infection) Phosphothreonine; by ROP18 modification is found at threonine 102. Threonine 108 bears the (Microbial infection) Phosphothreonine; by ROP18 mark. Positions 184, 186, 187, and 232 each coordinate GDP. Residues cysteine 236 and cysteine 410 are joined by a disulfide bond.

It belongs to the TRAFAC class dynamin-like GTPase superfamily. IRG family. Monomer, as apoenzyme and in the GDP-bound form. Homooligomer, upon GTP binding. Interacts with HOOK3. In terms of assembly, (Microbial infection) Interacts with Toxoplasma gondii GRA7 in GTP-dependent manner; the interaction results in faster turnover of the GTP-activated IIGP1 oligomer. Interacts with T.gondii ROP5; the interaction results in inhibition of IRGA6/IIGP1 GTPase activity and oligomerization. Post-translationally, myristoylated. (Microbial infection) Phosphorylated by Toxoplasma gondii ROP18 from virulent strains.

The protein localises to the cytoplasm. It is found in the nucleus membrane. The protein resides in the endoplasmic reticulum membrane. It localises to the golgi apparatus. Its subcellular location is the golgi stack membrane. The protein localises to the parasitophorous vacuole membrane. The catalysed reaction is GTP + H2O = GDP + phosphate + H(+). Functionally, GTPase with low activity. Has higher affinity for GDP than for GTP. Plays a role in resistance to intracellular pathogens. During infection with avirulent Toxoplasma gondii strains, recruited to the parasitophorous vacuole membrane. Required for disruption of the parasitophorous vacuole formed following T.gondii infection and subsequent killing of the parasite. Mediates resistance to Chlamydia trachomatis infection by targeting bacterial inclusions to autophagosomes for subsequent lysosomal destruction. The polypeptide is Interferon-inducible GTPase 1 (Iigp1) (Mus musculus (Mouse)).